The chain runs to 401 residues: Stearoyl-[acyl-carrier-protein] 9-desaturase 3, chloroplastic (401 aa).

The segment at 1 to 31 (MSMALLLTSPAMKQKPAVITSPRRGSSPSRR) is disordered. The N-terminal 35 residues, 1–35 (MSMALLLTSPAMKQKPAVITSPRRGSSPSRRLRVS), are a transit peptide targeting the chloroplast. The Fe cation site is built by glutamate 140, glutamate 178, histidine 181, glutamate 231, glutamate 264, and histidine 267.

The protein belongs to the fatty acid desaturase type 2 family. Homodimer. Fe(2+) serves as cofactor. As to expression, ubiquitously expressed with a preference in leaves, flowers and stems.

The protein localises to the plastid. It is found in the chloroplast. It carries out the reaction octadecanoyl-[ACP] + 2 reduced [2Fe-2S]-[ferredoxin] + O2 + 2 H(+) = (9Z)-octadecenoyl-[ACP] + 2 oxidized [2Fe-2S]-[ferredoxin] + 2 H2O. The protein operates within lipid metabolism; fatty acid metabolism. Its function is as follows. Converts stearoyl-ACP to oleoyl-ACP by introduction of a cis double bond between carbons 9 and 10 of the acyl chain. Also able to convert palmitoyl-ACP to palmitoleoyl-ACP at the C9 position. Exhibits delta-9 palmitoyl-[acyl-carrier-protein] desaturase (PAD) activity. Involved in omega-7 monounsaturated fatty acid biosynthesis, especially in the endosperm oil. The chain is Stearoyl-[acyl-carrier-protein] 9-desaturase 3, chloroplastic (S-ACP-DES3) from Arabidopsis thaliana (Mouse-ear cress).